Here is a 1115-residue protein sequence, read N- to C-terminus: G-protein coupled receptor GRL101 (1115 aa).

The first 24 residues, 1–24, serve as a signal peptide directing secretion; it reads MATMSGTTIVCLIYLTTMLGNSQG. Residues 25–767 are Extracellular-facing; the sequence is VNLKIESPSP…SCEDLMSNHV (743 aa). LDL-receptor class A domains are found at residues 36–79, 77–115, 116–155, 156–196, 195–232, 231–269, 272–318, 320–363, 365–403, 404–442, 444–485, and 486–525; these read TLCS…TCGC, CGCL…ECDI, YICP…ICER, RECV…ACDS, DSDK…NCKL, KLCD…VCAN, YGCP…YCSN, SECK…SCLA, PKCS…NCEN, HQCA…DCDP, PVCE…NCSQ, and HICL…NCRY. Disulfide bonds link C38–C53, C46–C66, C60–C77, C79–C91, C86–C104, C98–C113, C118–C131, C138–C153, C158–C170, C165–C183, C177–C194, C202–C220, C214–C230, C233–C245, C240–C258, and C252–C267. N87 carries N-linked (GlcNAc...) asparagine glycosylation. N-linked (GlcNAc...) asparagine glycosylation is present at N166. The N-linked (GlcNAc...) asparagine glycan is linked to N269. 3 disulfides stabilise this stretch: C274–C291, C282–C304, and C298–C316. N318 carries an N-linked (GlcNAc...) asparagine glycan. 15 disulfides stabilise this stretch: C322-C339, C334-C352, C346-C361, C367-C379, C374-C392, C386-C401, C406-C418, C413-C431, C425-C440, C446-C458, C453-C474, C465-C483, C488-C500, C495-C513, and C507-C523. N-linked (GlcNAc...) asparagine glycosylation occurs at N482. A glycan (N-linked (GlcNAc...) asparagine) is linked at N502. Residues 518 to 562 enclose the LRRNT domain; the sequence is WDENNCRYWCPHGQAICQCEGVTMDCTGQKLKEMPVQQMEEDLSK. A glycan (N-linked (GlcNAc...) asparagine) is linked at N571. 6 LRR repeats span residues 584 to 605, 608 to 629, 632 to 653, 656 to 677, 680 to 701, and 704 to 725; these read KVTY…SFQN, KLTH…SLLG, NLKQ…TFSS, HLTV…MFKG, QITV…AFNN, and NVRL…VFMG. N-linked (GlcNAc...) asparagine glycosylation is found at N618 and N624. An N-linked (GlcNAc...) asparagine glycan is attached at N685. Residues 768 to 788 traverse the membrane as a helical segment; sequence LRVSIWVLGVIALVGNFVVIF. Residues 789 to 801 lie on the Cytoplasmic side of the membrane; the sequence is WRVRDFRGGKVHS. The chain crosses the membrane as a helical span at residues 802–822; that stretch reads FLITNLAIGDFLMGVYLLIIA. The Extracellular portion of the chain corresponds to 823-857; sequence TADTYYRGVYISHDENWKQSGLCQFAGFVSTFSSE. The helical transmembrane segment at 858–878 threads the bilayer; that stretch reads LSVLTLSTITLDRLICILFPL. The Cytoplasmic portion of the chain corresponds to 879-887; it reads RRTRLGLRQ. Residues 888–908 traverse the membrane as a helical segment; it reads AIIVMSCIWVLVFLLAVLPLL. Residues 909–941 lie on the Extracellular side of the membrane; that stretch reads GFSYFENFYGRSGVCLALHVTPDRRPGWEYSVG. Residues 942-962 traverse the membrane as a helical segment; it reads VFILLNLLSFVLIASSYLWMF. At 963-988 the chain is on the cytoplasmic side; sequence SVAKKTRSAVRTAESKNDNAMARRMT. Residues 989-1009 form a helical membrane-spanning segment; it reads LIVMTDFCCWVPIIVLGFVSL. The Extracellular portion of the chain corresponds to 1010-1017; the sequence is AGARADDQ. The chain crosses the membrane as a helical span at residues 1018–1038; that stretch reads VYAWIAVFVLPLNSATNPVIY. The Cytoplasmic segment spans residues 1039–1115; sequence TLSTAPFLGN…YYNTELHSDS (77 aa).

The protein belongs to the G-protein coupled receptor 1 family. In terms of tissue distribution, predominantly expressed in a small number of neurons within the central nervous system and to a lesser extent in the heart.

It localises to the cell membrane. Its function is as follows. Might directly transduce signals carried by large extracellular lipoprotein complexes into neuronal events. This is G-protein coupled receptor GRL101 from Lymnaea stagnalis (Great pond snail).